A 245-amino-acid polypeptide reads, in one-letter code: 8-amino-3,8-dideoxy-manno-octulosonate cytidylyltransferase (245 aa).

Belongs to the KdsB family.

Its subcellular location is the cytoplasm. It carries out the reaction 8-amino-3,8-dideoxy-alpha-D-manno-octulosonate + CTP = CMP-8-amino-3,8-dideoxy-alpha-D-manno-oct-2-ulosonate + diphosphate. The protein operates within bacterial outer membrane biogenesis; lipopolysaccharide biosynthesis. In terms of biological role, activates KDO8N (a required 8-carbon sugar) for incorporation into bacterial lipopolysaccharide in the Shewanella genus. This Shewanella sp. (strain MR-7) protein is 8-amino-3,8-dideoxy-manno-octulosonate cytidylyltransferase.